A 480-amino-acid polypeptide reads, in one-letter code: Glutamate--tRNA ligase (480 aa).

Positions 8–18 match the 'HIGH' region motif; it reads PSPTGPLHIGG. The 'KMSKS' region signature appears at 249 to 253; the sequence is KMSKR. Lysine 252 serves as a coordination point for ATP.

It belongs to the class-I aminoacyl-tRNA synthetase family. Glutamate--tRNA ligase type 1 subfamily. In terms of assembly, monomer.

It is found in the cytoplasm. The catalysed reaction is tRNA(Glu) + L-glutamate + ATP = L-glutamyl-tRNA(Glu) + AMP + diphosphate. In terms of biological role, catalyzes the attachment of glutamate to tRNA(Glu) in a two-step reaction: glutamate is first activated by ATP to form Glu-AMP and then transferred to the acceptor end of tRNA(Glu). This chain is Glutamate--tRNA ligase, found in Carboxydothermus hydrogenoformans (strain ATCC BAA-161 / DSM 6008 / Z-2901).